The primary structure comprises 715 residues: ATP-dependent RecD2 DNA helicase (715 aa).

The tract at residues Met1 to Trp150 is not required for helicase activity. ATP contacts are provided by residues Gln343 and Gly363–Ser367. DNA-binding regions lie at residues Gly391 and Thr407–Tyr414. Gln466 is an ATP binding site. A DNA-binding region is located at residue Val470. Arg493 contacts ATP. 3 consecutive DNA-binding regions follow at residues Arg554–Lys555, Asn596–Asn604, and Thr644–Arg647. Residue Arg679 participates in ATP binding.

Belongs to the RecD family. RecD2 subfamily. As to quaternary structure, monomer; homodimers seem to be inactive.

It carries out the reaction Couples ATP hydrolysis with the unwinding of duplex DNA at the replication fork by translocating in the 5'-3' direction. This creates two antiparallel DNA single strands (ssDNA). The leading ssDNA polymer is the template for DNA polymerase III holoenzyme which synthesizes a continuous strand.. It catalyses the reaction ATP + H2O = ADP + phosphate + H(+). DNA-dependent ATPase (ssDNA stimulates the ATPase better than dsDNA) and ATP-dependent 5'-3' DNA helicase. Plays a role in an antioxidant pathway. Involved in DNA damage repair and/or recombination. Appears to move along DNA in single base steps, powered by hydrolysis of 1 molecule of ATP. Has low processivity, unwinds about 15-20 base pairs/second. Short (20 bp) substrates with 5'-overhangs or forked ends are the best substrates, is much less efficient on 52 or 76 bp substrates with 5'-overhangs. The presence of single-stranded DNA-binding protein (SSB) increases unwinding 4-5 fold. Has no activity on blunt DNA or DNA with 3'-overhangs. Requires at least 10 bases of 5'-ssDNA for helicase activity. The polypeptide is ATP-dependent RecD2 DNA helicase (Deinococcus radiodurans (strain ATCC 13939 / DSM 20539 / JCM 16871 / CCUG 27074 / LMG 4051 / NBRC 15346 / NCIMB 9279 / VKM B-1422 / R1)).